The sequence spans 195 residues: Recombination protein RecR (195 aa).

A C4-type zinc finger spans residues 53–68 (CPVCFNIDVKSPCSIC). The 96-residue stretch at 76-171 (QLLCIVEELG…KVTRLACGIP (96 aa)) folds into the Toprim domain.

It belongs to the RecR family.

Its function is as follows. May play a role in DNA repair. It seems to be involved in an RecBC-independent recombinational process of DNA repair. It may act with RecF and RecO. This is Recombination protein RecR from Ehrlichia chaffeensis (strain ATCC CRL-10679 / Arkansas).